The primary structure comprises 464 residues: Asparagine--tRNA ligase (464 aa).

The protein belongs to the class-II aminoacyl-tRNA synthetase family. As to quaternary structure, homodimer.

Its subcellular location is the cytoplasm. The catalysed reaction is tRNA(Asn) + L-asparagine + ATP = L-asparaginyl-tRNA(Asn) + AMP + diphosphate + H(+). In Xanthomonas axonopodis pv. citri (strain 306), this protein is Asparagine--tRNA ligase.